The sequence spans 176 residues: Transcription termination/antitermination protein NusG (176 aa).

The region spanning Gly125–His149 is the KOW domain.

The protein belongs to the NusG family.

In terms of biological role, participates in transcription elongation, termination and antitermination. The polypeptide is Transcription termination/antitermination protein NusG (Helicobacter pylori (strain J99 / ATCC 700824) (Campylobacter pylori J99)).